The sequence spans 504 residues: ATP synthase subunit alpha, chloroplastic (504 aa).

An ATP-binding site is contributed by 169 to 176 (GDRQTGKT).

It belongs to the ATPase alpha/beta chains family. In terms of assembly, F-type ATPases have 2 components, CF(1) - the catalytic core - and CF(0) - the membrane proton channel. CF(1) has five subunits: alpha(3), beta(3), gamma(1), delta(1), epsilon(1). CF(0) has four main subunits: a, b, b' and c.

The protein resides in the plastid. It is found in the chloroplast thylakoid membrane. It catalyses the reaction ATP + H2O + 4 H(+)(in) = ADP + phosphate + 5 H(+)(out). Produces ATP from ADP in the presence of a proton gradient across the membrane. The alpha chain is a regulatory subunit. This Stigeoclonium helveticum (Green alga) protein is ATP synthase subunit alpha, chloroplastic.